We begin with the raw amino-acid sequence, 76 residues long: MAKISCSYLLILMLALSVFSVVEKAKGDKRCSIIIDLSPCYPIECRLSCITERNGDGECVVSKVGSTPNCLCTYDC.

An N-terminal signal peptide occupies residues 1–27 (MAKISCSYLLILMLALSVFSVVEKAKG). Cystine bridges form between cysteine 31-cysteine 76, cysteine 40-cysteine 59, cysteine 45-cysteine 70, and cysteine 49-cysteine 72.

The protein belongs to the DEFL family.

Its subcellular location is the secreted. This chain is Defensin-like protein 155 (LCR36), found in Arabidopsis thaliana (Mouse-ear cress).